The primary structure comprises 251 residues: 5'-nucleotidase SurE (251 aa).

Residues Asp-8, Asp-9, Ser-39, and Asn-95 each contribute to the a divalent metal cation site.

The protein belongs to the SurE nucleotidase family. The cofactor is a divalent metal cation.

It is found in the cytoplasm. The enzyme catalyses a ribonucleoside 5'-phosphate + H2O = a ribonucleoside + phosphate. In terms of biological role, nucleotidase that shows phosphatase activity on nucleoside 5'-monophosphates. The protein is 5'-nucleotidase SurE of Clostridium botulinum (strain Eklund 17B / Type B).